The sequence spans 619 residues: Serine/threonine-protein kinase pkn1 (619 aa).

The Protein kinase domain maps to 15–302 (YRILYRKGQS…SSQNLPQAVL (288 aa)). 21–29 (KGQSLWSED) serves as a coordination point for ATP. The active-site Proton acceptor is the glutamate 141.

This sequence belongs to the protein kinase superfamily. Ser/Thr protein kinase family. Autophosphorylated on serine and threonine residues.

The enzyme catalyses L-seryl-[protein] + ATP = O-phospho-L-seryl-[protein] + ADP + H(+). The catalysed reaction is L-threonyl-[protein] + ATP = O-phospho-L-threonyl-[protein] + ADP + H(+). Its function is as follows. Together with the serine/threonine kinase PknD, may play a role in the specific interactions with host proteins during intracellular growth. The polypeptide is Serine/threonine-protein kinase pkn1 (pkn1) (Chlamydia pneumoniae (Chlamydophila pneumoniae)).